We begin with the raw amino-acid sequence, 254 residues long: Imidazole glycerol phosphate synthase subunit HisF (254 aa).

Catalysis depends on residues D12 and D131.

It belongs to the HisA/HisF family. As to quaternary structure, heterodimer of HisH and HisF.

The protein resides in the cytoplasm. The enzyme catalyses 5-[(5-phospho-1-deoxy-D-ribulos-1-ylimino)methylamino]-1-(5-phospho-beta-D-ribosyl)imidazole-4-carboxamide + L-glutamine = D-erythro-1-(imidazol-4-yl)glycerol 3-phosphate + 5-amino-1-(5-phospho-beta-D-ribosyl)imidazole-4-carboxamide + L-glutamate + H(+). The protein operates within amino-acid biosynthesis; L-histidine biosynthesis; L-histidine from 5-phospho-alpha-D-ribose 1-diphosphate: step 5/9. Its function is as follows. IGPS catalyzes the conversion of PRFAR and glutamine to IGP, AICAR and glutamate. The HisF subunit catalyzes the cyclization activity that produces IGP and AICAR from PRFAR using the ammonia provided by the HisH subunit. The polypeptide is Imidazole glycerol phosphate synthase subunit HisF (Leuconostoc mesenteroides subsp. mesenteroides (strain ATCC 8293 / DSM 20343 / BCRC 11652 / CCM 1803 / JCM 6124 / NCDO 523 / NBRC 100496 / NCIMB 8023 / NCTC 12954 / NRRL B-1118 / 37Y)).